Here is a 112-residue protein sequence, read N- to C-terminus: Secretoglobin family 2B member 20 (112 aa).

Positions 1-23 (MKGTLLLLGLLVTGELSFQTTEA) are cleaved as a signal peptide. N50 carries N-linked (GlcNAc...) asparagine glycosylation.

The protein belongs to the secretoglobin family. Expressed in lacrimal gland, at higher level in males than females. Expressed in the submandibular gland.

The protein localises to the secreted. This chain is Secretoglobin family 2B member 20 (Scgb2b20), found in Mus musculus (Mouse).